The sequence spans 244 residues: MEIKDEETTAEVAMVVQSRFRRVCVFCGSSHGKKKIYQDAAIELGKELVARNIDLVYGGGSVGLMGLVSQAVHNGGRHVIGVIPKTLMPREISGETVGEVKAVSDMHQRKAEMARQSDAFIALPGGYGTLEELLEVIAWAQLGIHDKPVGLLNVDGYYNPLLSFIDKAVEEGFIRPSARHIIVLAPTPKELIEKLEEYSPQHEKVVSKMKWEMEQMSYPQNYDIPRPKEGKMIIEAQRGSRLWM.

Residues Glu-91, 109 to 110 (RK), and 126 to 132 (GYGTLEE) each bind substrate.

Belongs to the LOG family.

It catalyses the reaction N(6)-(dimethylallyl)adenosine 5'-phosphate + H2O = N(6)-dimethylallyladenine + D-ribose 5-phosphate. The catalysed reaction is 9-ribosyl-trans-zeatin 5'-phosphate + H2O = trans-zeatin + D-ribose 5-phosphate. Functionally, cytokinin-activating enzyme working in the direct activation pathway. Phosphoribohydrolase that converts inactive cytokinin nucleotides to the biologically active free-base forms. The chain is Probable cytokinin riboside 5'-monophosphate phosphoribohydrolase LOGL2 (LOGL2) from Oryza sativa subsp. japonica (Rice).